Reading from the N-terminus, the 254-residue chain is tRNA uridine(34) hydroxylase (254 aa).

Residues 123–217 (QDPNVILLDT…YLESIPESES (95 aa)) form the Rhodanese domain. Residue Cys-177 is the Cysteine persulfide intermediate of the active site.

Belongs to the TrhO family.

It catalyses the reaction uridine(34) in tRNA + AH2 + O2 = 5-hydroxyuridine(34) in tRNA + A + H2O. Its function is as follows. Catalyzes oxygen-dependent 5-hydroxyuridine (ho5U) modification at position 34 in tRNAs. This chain is tRNA uridine(34) hydroxylase, found in Legionella pneumophila (strain Corby).